Here is a 58-residue protein sequence, read N- to C-terminus: Putative antitoxin VapB16 (58 aa).

Functionally, putative antitoxin component of a possible type II toxin-antitoxin (TA) system. The cognate toxin is VapC16. The sequence is that of Putative antitoxin VapB16 (vapB16) from Mycobacterium tuberculosis (strain ATCC 25618 / H37Rv).